The primary structure comprises 625 residues: Glutamine--fructose-6-phosphate aminotransferase [isomerizing] (625 aa).

C2 (nucleophile; for GATase activity) is an active-site residue. Residues 2 to 229 form the Glutamine amidotransferase type-2 domain; it reads CGLVGYVGQR…QDQAVVITAD (228 aa). SIS domains follow at residues 298-437 and 470-615; these read SDQE…ARGT and LAYR…VDKP. The active-site For Fru-6P isomerization activity is the K620.

In terms of assembly, homodimer.

Its subcellular location is the cytoplasm. The catalysed reaction is D-fructose 6-phosphate + L-glutamine = D-glucosamine 6-phosphate + L-glutamate. Functionally, catalyzes the first step in hexosamine metabolism, converting fructose-6P into glucosamine-6P using glutamine as a nitrogen source. The sequence is that of Glutamine--fructose-6-phosphate aminotransferase [isomerizing] from Mycobacterium leprae (strain TN).